Reading from the N-terminus, the 151-residue chain is NADPH-dependent 7-cyano-7-deazaguanine reductase (151 aa).

C51 serves as the catalytic Thioimide intermediate. D58 functions as the Proton donor in the catalytic mechanism. Residues 73 to 75 (VES) and 92 to 93 (HE) contribute to the substrate site.

The protein belongs to the GTP cyclohydrolase I family. QueF type 1 subfamily.

The protein resides in the cytoplasm. The enzyme catalyses 7-aminomethyl-7-carbaguanine + 2 NADP(+) = 7-cyano-7-deazaguanine + 2 NADPH + 3 H(+). The protein operates within tRNA modification; tRNA-queuosine biosynthesis. Functionally, catalyzes the NADPH-dependent reduction of 7-cyano-7-deazaguanine (preQ0) to 7-aminomethyl-7-deazaguanine (preQ1). The protein is NADPH-dependent 7-cyano-7-deazaguanine reductase of Bacteroides fragilis (strain ATCC 25285 / DSM 2151 / CCUG 4856 / JCM 11019 / LMG 10263 / NCTC 9343 / Onslow / VPI 2553 / EN-2).